A 460-amino-acid polypeptide reads, in one-letter code: Cysteine--tRNA ligase (460 aa).

Cysteine 29 contributes to the Zn(2+) binding site. The short motif at 31–41 (PTVYDFAHIGN) is the 'HIGH' region element. Zn(2+)-binding residues include cysteine 227, histidine 252, and glutamate 256. Positions 285–289 (KMSKS) match the 'KMSKS' region motif. Lysine 288 is a binding site for ATP.

This sequence belongs to the class-I aminoacyl-tRNA synthetase family. Monomer. Zn(2+) is required as a cofactor.

The protein localises to the cytoplasm. It carries out the reaction tRNA(Cys) + L-cysteine + ATP = L-cysteinyl-tRNA(Cys) + AMP + diphosphate. This chain is Cysteine--tRNA ligase, found in Bradyrhizobium diazoefficiens (strain JCM 10833 / BCRC 13528 / IAM 13628 / NBRC 14792 / USDA 110).